A 440-amino-acid polypeptide reads, in one-letter code: Protein C-ets-1 (440 aa).

2 positions are modified to N6-acetyllysine; alternate: K8 and K15. Glycyl lysine isopeptide (Lys-Gly) (interchain with G-Cter in SUMO2); alternate cross-links involve residues K8 and K15. K15 participates in a covalent cross-link: Glycyl lysine isopeptide (Lys-Gly) (interchain with G-Cter in SUMO); alternate. T38 bears the Phosphothreonine; by MAPK mark. The 86-residue stretch at 51–136 (ATFSGFTKEQ…EHLEILQKED (86 aa)) folds into the PNT domain. The segment at 130 to 243 (EILQKEDVKP…DNMCLGRASR (114 aa)) is activation domain; required for transcription activation. K138 is covalently cross-linked (Glycyl lysine isopeptide (Lys-Gly) (interchain with G-Cter in SUMO2)). Phosphotyrosine is present on Y223. Residue K227 forms a Glycyl lysine isopeptide (Lys-Gly) (interchain with G-Cter in SUMO) linkage. Residue S251 is modified to Phosphoserine; by CaMK2. The residue at position 254 (S254) is a Phosphoserine. T265 is modified (phosphothreonine). Phosphoserine is present on residues S267 and S270. 2 positions are modified to phosphoserine; by CaMK2: S282 and S285. Positions 304 to 312 (FKDYVRDRA) are helix HI-1. K305 is subject to N6-acetyllysine. Residues 323 to 330 (AAALAGYT) are helix HI-2. Positions 335–415 (IQLWQFLLEL…AGKRYVYRFV (81 aa)) form a DNA-binding region, ETS. The interval 418 to 422 (LQSLL) is helix H4. The helix H5 stretch occupies residues 426-432 (PEELHAM).

Belongs to the ETS family. As to quaternary structure, binds DNA as a homodimer; homodimerization is required for transcription activation. Interacts with MAF and MAFB. Interacts with PAX5; the interaction alters DNA-binding properties. Interacts with DAXX. Interacts with UBE2I. Interacts with SP100; the interaction is direct and modulates ETS1 transcriptional activity. In terms of processing, phosphorylation at Ser-251, Ser-282 and Ser-285 by CaMK2/CaMKII in response to calcium signaling decreases affinity for DNA: an increasing number of phosphoserines causes DNA-binding to become progressively weaker. Sumoylated on Lys-15 and Lys-227, preferentially with SUMO2; which inhibits transcriptional activity. Post-translationally, ubiquitinated; which induces proteasomal degradation.

Its subcellular location is the nucleus. It localises to the cytoplasm. Autoinhibited by a module composed of four alpha helices (HI-1, HI-2, H4, and H5) that flank the DNA-binding ETS domain, reducing the affinity for DNA. Phosphorylation by CaMK2/CaMKII in response to calcium signaling decreases affinity for DNA. In terms of biological role, transcription factor. Directly controls the expression of cytokine and chemokine genes in a wide variety of different cellular contexts. May control the differentiation, survival and proliferation of lymphoid cells. May also regulate angiogenesis through regulation of expression of genes controlling endothelial cell migration and invasion. This Mus musculus (Mouse) protein is Protein C-ets-1 (Ets1).